Reading from the N-terminus, the 63-residue chain is Cecropin-B (63 aa).

Residues 1-22 (MNFNKIFVFVALILAISLGNTE) form the signal peptide. Position 62 is an arginine amide (R62).

It belongs to the cecropin family.

It localises to the secreted. In terms of biological role, cecropins have lytic and antibacterial activity against several Gram-positive and Gram-negative bacteria. The polypeptide is Cecropin-B (CecB) (Drosophila simulans (Fruit fly)).